A 262-amino-acid chain; its full sequence is Acyl-[acyl-carrier-protein]--UDP-N-acetylglucosamine O-acyltransferase (262 aa).

This sequence belongs to the transferase hexapeptide repeat family. LpxA subfamily. As to quaternary structure, homotrimer.

The protein resides in the cytoplasm. It carries out the reaction a (3R)-hydroxyacyl-[ACP] + UDP-N-acetyl-alpha-D-glucosamine = a UDP-3-O-[(3R)-3-hydroxyacyl]-N-acetyl-alpha-D-glucosamine + holo-[ACP]. The protein operates within glycolipid biosynthesis; lipid IV(A) biosynthesis; lipid IV(A) from (3R)-3-hydroxytetradecanoyl-[acyl-carrier-protein] and UDP-N-acetyl-alpha-D-glucosamine: step 1/6. Functionally, involved in the biosynthesis of lipid A, a phosphorylated glycolipid that anchors the lipopolysaccharide to the outer membrane of the cell. This chain is Acyl-[acyl-carrier-protein]--UDP-N-acetylglucosamine O-acyltransferase, found in Paraburkholderia xenovorans (strain LB400).